A 124-amino-acid chain; its full sequence is Small ribosomal subunit protein uS12 (124 aa).

A disordered region spans residues 1–22 (MATVNQLVRKPRQKPDAKSNVA). Aspartate 89 is subject to 3-methylthioaspartic acid.

It belongs to the universal ribosomal protein uS12 family. In terms of assembly, part of the 30S ribosomal subunit. Contacts proteins S8 and S17. May interact with IF1 in the 30S initiation complex.

Its function is as follows. With S4 and S5 plays an important role in translational accuracy. Interacts with and stabilizes bases of the 16S rRNA that are involved in tRNA selection in the A site and with the mRNA backbone. Located at the interface of the 30S and 50S subunits, it traverses the body of the 30S subunit contacting proteins on the other side and probably holding the rRNA structure together. The combined cluster of proteins S8, S12 and S17 appears to hold together the shoulder and platform of the 30S subunit. This Pseudoalteromonas atlantica (strain T6c / ATCC BAA-1087) protein is Small ribosomal subunit protein uS12.